Reading from the N-terminus, the 473-residue chain is MAVKTYQAGVTEYRQSYWQPDYAPLDTDLLACFKITPQPGVDREEAAVAVAAESSCGTWTTVWTDLLTDLDYYKGRAYRLEDVPGDDTCFYAFIAYPIDLFEEGSVVNVFTSLVGNVFGFKAVRALRLEDLRFPIAYVKTCGGPPNGIQVERDKLNKYGRLLLGCTIKPKLGLSAKNYGRACYEALRGGLDFTKDDENINSQPFMRWRDRFDFVMEAVQKAEQETGERKGHYLNVTAPTPEEMYKRAEHAKEIGAPIIMHDYLAGGLCANAGLANWCRNNGMLPHVHRAMHAVLDRNPHHGIHFRVLTKILRLSGGDHLHTGTVVGKLEGDRASTLGWIDLLRESFVPEDRSRGIFFDQDWGSMPGAFAVASGGIHVWHMPALVAIFGDDSVLQFGGGTLGHPWGNAAGAHANRVALEACVQARNEGRQIEKEGREILTAAAQHSPELKIAMETWKEIKFEFETMDKLAIANK.

Asparagine 116 and threonine 166 together coordinate substrate. Catalysis depends on lysine 168, which acts as the Proton acceptor. Lysine 170 provides a ligand contact to substrate. Mg(2+)-binding residues include lysine 194, aspartate 196, and glutamate 197. Lysine 194 carries the post-translational modification N6-carboxylysine. Histidine 287 functions as the Proton acceptor in the catalytic mechanism. 3 residues coordinate substrate: arginine 288, histidine 320, and serine 372.

Belongs to the RuBisCO large chain family. Type I subfamily. In terms of assembly, heterohexadecamer of 8 large chains and 8 small chains. Mg(2+) serves as cofactor.

The catalysed reaction is 2 (2R)-3-phosphoglycerate + 2 H(+) = D-ribulose 1,5-bisphosphate + CO2 + H2O. It catalyses the reaction D-ribulose 1,5-bisphosphate + O2 = 2-phosphoglycolate + (2R)-3-phosphoglycerate + 2 H(+). Functionally, ruBisCO catalyzes two reactions: the carboxylation of D-ribulose 1,5-bisphosphate, the primary event in carbon dioxide fixation, as well as the oxidative fragmentation of the pentose substrate. Both reactions occur simultaneously and in competition at the same active site. This is Ribulose bisphosphate carboxylase large chain from Nitrosospira sp. (strain TCH716).